A 332-amino-acid polypeptide reads, in one-letter code: BRISC and BRCA1-A complex member 1 (332 aa).

M1 bears the N-acetylmethionine mark. Residues 1-88 (MEVAEPSCPT…PPPAPEVQVR (88 aa)) are disordered. Over residues 10–23 (TEEEEEEEEEEEQS) the composition is skewed to acidic residues. 3 positions are modified to phosphoserine: S32, S52, and S60. Residues 70–83 (GAGPKPWQVPPPAP) show a composition bias toward pro residues. A VWFA-like region spans residues 98–301 (VIICLDLSEE…LELHNCMAKL (204 aa)).

The protein belongs to the BABAM1 family. In terms of assembly, component of the ARISC complex, at least composed of UIMC1/RAP80, ABRAXAS1, BRCC3/BRCC36, BABAM2 and BABAM1/NBA1. Component of the BRCA1-A complex, at least composed of BRCA1, BARD1, UIMC1/RAP80, ABRAXAS1, BRCC3/BRCC36, BABAM2 and BABAM1/NBA1. In the BRCA1-A complex, interacts directly with ABRAXAS1 and BABAM2. Component of the BRISC complex, at least composed of ABRAXAS2, BRCC3/BRCC36, BABAM2 and BABAM1/NBA1. Identified in a complex with SHMT2 and the other subunits of the BRISC complex.

It is found in the cytoplasm. The protein resides in the nucleus. Its function is as follows. Component of the BRCA1-A complex, a complex that specifically recognizes 'Lys-63'-linked ubiquitinated histones H2A and H2AX at DNA lesions sites, leading to target the BRCA1-BARD1 heterodimer to sites of DNA damage at double-strand breaks (DSBs). The BRCA1-A complex also possesses deubiquitinase activity that specifically removes 'Lys-63'-linked ubiquitin on histones H2A and H2AX. In the BRCA1-A complex, it is required for the complex integrity and its localization at DSBs. Component of the BRISC complex, a multiprotein complex that specifically cleaves 'Lys-63'-linked ubiquitin in various substrates. In these 2 complexes, it is probably required to maintain the stability of BABAM2 and help the 'Lys-63'-linked deubiquitinase activity mediated by BRCC3/BRCC36 component. The BRISC complex is required for normal mitotic spindle assembly and microtubule attachment to kinetochores via its role in deubiquitinating NUMA1. Plays a role in interferon signaling via its role in the deubiquitination of the interferon receptor IFNAR1; deubiquitination increases IFNAR1 activity by enhancing its stability and cell surface expression. Down-regulates the response to bacterial lipopolysaccharide (LPS) via its role in IFNAR1 deubiquitination. The sequence is that of BRISC and BRCA1-A complex member 1 (BABAM1) from Bos taurus (Bovine).